Here is a 110-residue protein sequence, read N- to C-terminus: Senescence associated gene 20 (110 aa).

This Arabidopsis thaliana (Mouse-ear cress) protein is Senescence associated gene 20.